The sequence spans 356 residues: Heparan sulfate 2-O-sulfotransferase 1 (356 aa).

At 1-11 (MGLLRIMMPPK) the chain is on the cytoplasmic side. Residues 12-28 (LQLLAVLTFGVLMLFLE) traverse the membrane as a helical; Signal-anchor for type II membrane protein segment. Residues 24–51 (MLFLENQIQNLEESREKLERAIARHEVR) are a coiled coil. The Lumenal portion of the chain corresponds to 29–356 (NQIQNLEESR…FYEKIYPKSN (328 aa)). Adenosine 3',5'-bisphosphate contacts are provided by Lys83, Thr84, Ala85, Ser86, Thr87, and Ser88. 2 N-linked (GlcNAc...) asparagine glycosylation sites follow: Asn108 and Asn127. Catalysis depends on residues His140 and His142. Adenosine 3',5'-bisphosphate contacts are provided by Arg164 and Ser172. Intrachain disulfides connect Cys201-Cys209 and Cys222-Cys228. 4 residues coordinate adenosine 3',5'-bisphosphate: Tyr279, Ser285, Thr290, and Lys293.

It belongs to the sulfotransferase 3 family. As to quaternary structure, homotrimer.

Its subcellular location is the golgi apparatus membrane. Functionally, catalyzes the transfer of a sulfo group from 3'-phospho-5'-adenylyl sulfate (PAPS) to the 2-OH position of iduronic acid (IdoA) or glucuronic acid (GlcA) within the heparan sulfate (HS) chain and participates in HS biosynthesis. The polypeptide is Heparan sulfate 2-O-sulfotransferase 1 (Xenopus laevis (African clawed frog)).